The sequence spans 487 residues: Malonate-semialdehyde dehydrogenase 2 (487 aa).

NAD(+) contacts are provided by F154, K178, E181, R182, and S231. The Nucleophile role is filled by C286. E386 serves as a coordination point for NAD(+).

The protein belongs to the aldehyde dehydrogenase family. IolA subfamily. In terms of assembly, homotetramer.

It carries out the reaction 3-oxopropanoate + NAD(+) + CoA + H2O = hydrogencarbonate + acetyl-CoA + NADH + H(+). The catalysed reaction is 2-methyl-3-oxopropanoate + NAD(+) + CoA + H2O = propanoyl-CoA + hydrogencarbonate + NADH + H(+). Its pathway is polyol metabolism; myo-inositol degradation into acetyl-CoA; acetyl-CoA from myo-inositol: step 7/7. Its function is as follows. Catalyzes the oxidation of malonate semialdehyde (MSA) and methylmalonate semialdehyde (MMSA) into acetyl-CoA and propanoyl-CoA, respectively. Is involved in a myo-inositol catabolic pathway. Bicarbonate, and not CO2, is the end-product of the enzymatic reaction. The chain is Malonate-semialdehyde dehydrogenase 2 from Bacillus thuringiensis subsp. konkukian (strain 97-27).